We begin with the raw amino-acid sequence, 472 residues long: Uronate isomerase (472 aa).

This sequence belongs to the metallo-dependent hydrolases superfamily. Uronate isomerase family.

The enzyme catalyses D-glucuronate = D-fructuronate. It carries out the reaction aldehydo-D-galacturonate = keto-D-tagaturonate. It functions in the pathway carbohydrate metabolism; pentose and glucuronate interconversion. The protein is Uronate isomerase of Nostoc punctiforme (strain ATCC 29133 / PCC 73102).